The chain runs to 700 residues: MAGIAMKLAKDREAAEGLGSHERAIKYLNQDYETLRNECLEAGALFQDPSFPALPSSLGFKELGPYSSKTRGIEWKRPTEICADPQFIIGGATRTDICQGALGDCWLLAAIASLTLNEEILARVVPLDQSFQENYAGIFHFQFWQYGEWVEVVVDDRLPTKDGELLFVHSAEGSEFWSALLEKAYAKINGCYEALSGGATTEGFEDFTGGIAEWYELRKPPPNLFKIIQKALEKGSLLGCSIDITSAADSEAVTYQKLVKGHAYSVTGAEEVESSGSLQKLIRIRNPWGQVEWTGKWNDNCPSWNTVDPEVRANLTERQEDGEFWMSFSDFLRHYSRLEICNLTPDTLTCDSYKKWKLTKMDGNWRRGSTAGGCRNYPNTFWMNPQYLIKLEEEDEDDEDGERGCTFLVGLIQKHRRRQRKMGEDMHTIGFGIYEVPEELTGQTNIHLSKNFFLTTRARERSDTFINLREVLNRFKLPPGEYVLVPSTFEPHKNGDFCIRVFSEKKADYQTVDDEIEANIEEIEANEEDIGDGFRRLFAQLAGEDAEISAFELQTILRRVLAKREDIKSDGFSIETCKIMVDMLDEDGSGKLGLKEFYILWTKIQKYQKIYREIDVDRSGTMNSYEMRKALEEAGFKLPCQLHQVIVARFADDELIIDFDNFVRCLVRLEILFKIFKQLDPENTGTIQLDLISWLSFSVL.

Alanine 2 is modified (N-acetylalanine). The propeptide at 2-19 (AGIAMKLAKDREAAEGLG) is anchors to the small subunit. One can recognise a Calpain catalytic domain in the interval 45–344 (LFQDPSFPAL…YSRLEICNLT (300 aa)). Residues isoleucine 89, glycine 91, and aspartate 96 each coordinate Ca(2+). Residue cysteine 105 is part of the active site. Glutamate 175, glutamine 229, and lysine 230 together coordinate Ca(2+). Catalysis depends on residues histidine 262 and asparagine 286. Ca(2+) is bound by residues glutamate 292, aspartate 299, glutamine 319, and glutamate 323. A domain III region spans residues 345-514 (PDTLTCDSYK…KKADYQTVDD (170 aa)). A linker region spans residues 515-529 (EIEANIEEIEANEED). The tract at residues 530–700 (IGDGFRRLFA…LISWLSFSVL (171 aa)) is domain IV. Residues alanine 542, aspartate 545, glutamate 547, glutamate 552, aspartate 585, aspartate 587, serine 589, lysine 591, glutamate 596, aspartate 615, aspartate 617, serine 619, threonine 621, glutamate 626, aspartate 658, and asparagine 661 each coordinate Ca(2+). 2 EF-hand domains span residues 572–605 (FSIETCKIMVDMLDEDGSGKLGLKEFYILWTKIQ) and 602–637 (TKIQKYQKIYREIDVDRSGTMNSYEMRKALEEAGFK). Positions 667-700 (VRLEILFKIFKQLDPENTGTIQLDLISWLSFSVL) constitute an EF-hand 3 domain.

This sequence belongs to the peptidase C2 family. Forms a heterodimer with a small (regulatory) subunit (CAPNS1). Interacts with CPEB3; this leads to cleavage of CPEB3. The cofactor is Ca(2+). In terms of tissue distribution, ubiquitous.

It is found in the cytoplasm. Its subcellular location is the cell membrane. It carries out the reaction Broad endopeptidase specificity.. Activated by 200-1000 micromolar concentrations of calcium and inhibited by calpastatin. In terms of biological role, calcium-regulated non-lysosomal thiol-protease which catalyze limited proteolysis of substrates involved in cytoskeletal remodeling and signal transduction. Proteolytically cleaves MYOC at 'Arg-226'. Proteolytically cleaves CPEB3 following neuronal stimulation which abolishes CPEB3 translational repressor activity, leading to translation of CPEB3 target mRNAs. This is Calpain-2 catalytic subunit (Capn2) from Rattus norvegicus (Rat).